Consider the following 251-residue polypeptide: Elongator complex protein 6 (251 aa).

It belongs to the ELP6 family. As to quaternary structure, component of the elongator complex composed of Elp1, Elp2, Elp3, Elp4, Elp5 and Elp6. The elongator complex associates with and stabilizes microtubules; efficient interaction requires the full complex. Interacts with InR/Insulin-like receptor; the interaction may stabilize Elp6.

Its subcellular location is the cytoplasm. The protein resides in the nucleus. It is found in the cytoskeleton. It localises to the spindle. The protein operates within tRNA modification; 5-methoxycarbonylmethyl-2-thiouridine-tRNA biosynthesis. Its function is as follows. Component of the elongator complex, which is required for multiple tRNA modifications, including mcm5U (5-methoxycarbonylmethyl uridine), mcm5s2U (5-methoxycarbonylmethyl-2-thiouridine), and ncm5U (5-carbamoylmethyl uridine). The elongator complex catalyzes formation of carboxymethyluridine in the wobble base at position 34 in tRNAs. Binding by the elongator complex stabilizes microtubules and promotes their growth. This induces central spindle asymmetry, promoting polarized signaling endosome trafficking during asymmetric cell division and cell fate assignation of sensory organ precursor cells. Required in germ line cells for microtubule organization involved in oocyte polarization and chromosome organization. Involved in InR-TOR (insulin-like receptor-target of rapamycin) signaling regulation of cellular metabolism, autophagy and apoptosis. This chain is Elongator complex protein 6, found in Drosophila melanogaster (Fruit fly).